Reading from the N-terminus, the 1186-residue chain is MYND-type zinc finger-containing chromatin reader ZMYND8 (1186 aa).

The span at 1-12 (MDISTRSKDPGS) shows a compositional bias: basic and acidic residues. Positions 1–57 (MDISTRSKDPGSAERTAQKRKFPSPPHSSNGHSPQDTSTSPIKKKKKPGLLNSNNKE) are disordered. The segment at 1-850 (MDISTRSKDP…QQQQQQQNQQ (850 aa)) is required for interaction with CCNT1. Serine 12 participates in a covalent cross-link: Glycyl lysine isopeptide (Lys-Gly) (interchain with G-Cter in SUMO2). Position 24 is a phosphoserine (serine 24). Residues lysine 56 and lysine 70 each participate in a glycyl lysine isopeptide (Lys-Gly) (interchain with G-Cter in SUMO2) cross-link. Residues 75 to 268 (TDPVDVVPQD…YLAACQKRDN (194 aa)) form an interaction with histone H3K4me0 region. Positions 75 to 406 (TDPVDVVPQD…VKLNFDMTAS (332 aa)) are interaction with histone H3K14ac. The PHD-type zinc finger occupies 88–133 (DFYCWVCHREGQVLCCELCPRVYHAKCLRLTSEPEGDWFCPECEKI). Residues 88-327 (DFYCWVCHRE…INNCYLMSKE (240 aa)) are required for interaction with histone H3 and histone H4. Zn(2+)-binding residues include cysteine 91, cysteine 94, cysteine 103, cysteine 106, histidine 111, cysteine 114, cysteine 127, and cysteine 130. The Bromo domain occupies 145 to 252 (AMTMLTIEQL…KICEHEMNEI (108 aa)). 3 residues coordinate Zn(2+): cysteine 255, cysteine 258, and cysteine 274. One can recognise a PWWP domain in the interval 277–327 (PHPLVWAKLKGFPFWPAKALRDKDGQVDARFFGQHDRAWVPINNCYLMSKE). A Glycyl lysine isopeptide (Lys-Gly) (interchain with G-Cter in SUMO2) cross-link involves residue lysine 390. At threonine 404 the chain carries Phosphothreonine. At serine 406 the chain carries Phosphoserine. The interval 412–512 (SKPVLSGGTG…TTKTDKTSTT (101 aa)) is disordered. At lysine 413 the chain carries N6-acetyllysine; alternate. A Glycyl lysine isopeptide (Lys-Gly) (interchain with G-Cter in SUMO2); alternate cross-link involves residue lysine 413. Phosphoserine occurs at positions 417, 425, and 432. Residues 433–442 (PMSTNSSVHT) are compositionally biased toward polar residues. Position 444 is a phosphoserine (serine 444). Lysine 453 participates in a covalent cross-link: Glycyl lysine isopeptide (Lys-Gly) (interchain with G-Cter in SUMO2). Residues serine 460, serine 462, serine 465, serine 486, serine 490, and serine 495 each carry the phosphoserine modification. Residues 472–489 (STASPASTKTGQAGSLSG) are compositionally biased toward polar residues. Residue lysine 505 forms a Glycyl lysine isopeptide (Lys-Gly) (interchain with G-Cter in SUMO2) linkage. Phosphoserine is present on residues serine 514 and serine 523. Lysine 530 is covalently cross-linked (Glycyl lysine isopeptide (Lys-Gly) (interchain with G-Cter in SUMO2)). Threonine 541 carries the phosphothreonine modification. Serine 547 is subject to Phosphoserine. Lysine 549 participates in a covalent cross-link: Glycyl lysine isopeptide (Lys-Gly) (interchain with G-Cter in SUMO2). Residue threonine 563 is modified to Phosphothreonine. Positions 582 to 884 (TAVEHSDSED…ITQSPSTSTI (303 aa)) are disordered. Basic and acidic residues-rich tracts occupy residues 585–597 (EHSD…KSDS) and 606–631 (DEQK…EPSA). Residues lysine 611 and lysine 645 each participate in a glycyl lysine isopeptide (Lys-Gly) (interchain with G-Cter in SUMO2) cross-link. Residues serine 652 and serine 655 each carry the phosphoserine modification. The segment covering 656–696 (EKADPGAVKDKASPEPEKDFSEKAKPSPHPIKDKLKGKDET) has biased composition (basic and acidic residues). Lysine 657 is covalently cross-linked (Glycyl lysine isopeptide (Lys-Gly) (interchain with G-Cter in SUMO2)). Phosphoserine occurs at positions 668, 682, 707, 709, and 737. Over residues 718–738 (GEDHSGREGRKNKKEPKEPSP) the composition is skewed to basic and acidic residues. Threonine 746 carries the post-translational modification Phosphothreonine. Serine 754 and serine 756 each carry phosphoserine. Residues 766-799 (SSAQTSAAGATATTSTSSTVTVTAPAPAATGSPV) are compositionally biased toward low complexity. Positions 818 to 832 (VWNSSSKFQTSSQKW) are enriched in polar residues. A compositionally biased stretch (low complexity) spans 835–857 (QKMQRQQQQQQQQNQQQQPQSSQ). Residues 873–884 (KEITQSPSTSTI) show a composition bias toward polar residues. The required for homodimerization stretch occupies residues 875–1047 (ITQSPSTSTI…YCCWNTSYCD (173 aa)). Residues cysteine 1028, cysteine 1031, cysteine 1039, cysteine 1040, cysteine 1046, cysteine 1050, histidine 1058, and cysteine 1062 each coordinate Zn(2+). An MYND-type zinc finger spans residues 1028–1062 (CANCKKEAIFYCCWNTSYCDYPCQQAHWPEHMKSC). Residues 1028 to 1062 (CANCKKEAIFYCCWNTSYCDYPCQQAHWPEHMKSC) form a required for recruitment to DNA damage sites and for interaction with the NuRD complex, CHD4, HDAC1, HDAC2 and KDM1A region. Residues 1071–1186 (QEADAEVNTE…KESRLDTFWD (116 aa)) form a disordered region. Residues 1085-1103 (SSQGSSSSTQSAPSETASA) show a composition bias toward low complexity. The span at 1104–1116 (SKEKETSAEKSKE) shows a compositional bias: basic and acidic residues. A Glycyl lysine isopeptide (Lys-Gly) (interchain with G-Cter in SUMO2) cross-link involves residue lysine 1115. The residue at position 1119 (serine 1119) is a Phosphoserine. Over residues 1121–1140 (LDLSGSRETPSSILLGSNQG) the composition is skewed to polar residues. Serine 1141 carries the phosphoserine modification. An interaction with PRKCB1 region spans residues 1147–1186 (NKSSWSSSDEKRGSTRSDHNTSTSTKSLLPKESRLDTFWD). Composition is skewed to basic and acidic residues over residues 1154-1165 (SDEKRGSTRSDH) and 1175-1186 (LPKESRLDTFWD).

Monomer and homodimer. Interacts with NuRD subcomplexes containing GATAD2A. Interacts with the histone deacetylase NuRD complex subunit CHD4; the interaction is direct, appears to occur with monomeric ZMYND8, and is increased following DNA damage. Interacts (via N-terminus) with the P-TEFb complex subunit CCNT1 (via central region); the interaction is direct and the association appears to occur between homodimeric ZMYND8 and the activated form of the P-TEFb complex. Interacts (via N-terminus) with DBN1 (via ADF-H domain); the interaction leads to sequestering of ZMYND8 in the cytoplasm. Interacts with the P-TEFb complex subunit CDK9; the association appears to occur between homodimeric ZMYND8 and the activated form of the P-TEFb complex. Interacts with EZH2; the interaction is dependent on the presence of chromatin. Interacts (via MYND domain) with the NuRD complex subunit GATAD2A. Interacts with histone H3 (via N-terminus) that is both methylated at 'Lys-4' (H3K4me1) and acetylated at 'Lys-14' (H3K14ac), with histone H3 (via N-terminus) unmodified at 'Lys-4' (H3K4me0) and acetylated at 'Lys-14' (H3K14ac), and with histone H3 (via N-terminus) di-methylated at 'Lys-36' (H3K36me2). Interacts (via Bromo domain) with histone H4 acetylated at 'Lys-16' (H4K16ac). Interacts with HDAC1. Interacts with HDAC2. Interacts with KDM1A. Interacts with KDM5C. Interacts with KDM5D. Interacts in vitro with PRKCB. Interacts with RNA polymerase II subunit POLR2A phosphorylated at 'Ser-5'. Interacts with ZNF592. Interacts with ZNF687. Does not interact with GATAD2B. Expressed in neurons (at protein level). Absent in astrocytes (at protein level). Expressed in all tissues examined with highest expression in brain, lung, pancreas, and placenta. Expressed in cutaneous T-cell lymphomas (CTCL).

The protein resides in the nucleus. It is found in the chromosome. It localises to the cytoplasm. In terms of biological role, chromatin reader that recognizes dual histone modifications such as histone H3.1 dimethylated at 'Lys-36' and histone H4 acetylated at 'Lys-16' (H3.1K36me2-H4K16ac) and histone H3 methylated at 'Lys-4' and histone H4 acetylated at 'Lys-14' (H3K4me1-H3K14ac). May act as a transcriptional corepressor for KDM5D by recognizing the dual histone signature H3K4me1-H3K14ac. May also act as a transcriptional corepressor for KDM5C and EZH2. Recognizes acetylated histone H4 and recruits the NuRD chromatin remodeling complex to damaged chromatin for transcriptional repression and double-strand break repair by homologous recombination. Also activates transcription elongation by RNA polymerase II through recruiting the P-TEFb complex to target promoters. Localizes to H3.1K36me2-H4K16ac marks at all-trans-retinoic acid (ATRA)-responsive genes and positively regulates their expression. Promotes neuronal differentiation by associating with regulatory regions within the MAPT gene, to enhance transcription of a protein-coding MAPT isoform and suppress the non-coding MAPT213 isoform. Suppresses breast cancer, and prostate cancer cell invasion and metastasis. In Homo sapiens (Human), this protein is MYND-type zinc finger-containing chromatin reader ZMYND8 (ZMYND8).